The chain runs to 221 residues: Iron-sulfur cluster repair protein YtfE (221 aa).

The protein belongs to the RIC family. YtfE subfamily. In terms of assembly, homodimer.

Its subcellular location is the cytoplasm. Its function is as follows. Di-iron-containing protein involved in the repair of iron-sulfur clusters damaged by oxidative and nitrosative stress conditions. The sequence is that of Iron-sulfur cluster repair protein YtfE from Dickeya chrysanthemi (strain Ech1591) (Dickeya zeae (strain Ech1591)).